A 510-amino-acid chain; its full sequence is E3 ubiquitin-protein ligase TRIM7 (510 aa).

An RING-type zinc finger spans residues 29 to 81; the sequence is CSICLEFFREPVSVECGHSFCRACIMRCWERPGAGTGTATRTLPCPLPCPQCR. Residue serine 106 is modified to Phosphoserine; by RPS6KA5. The B box-type zinc-finger motif lies at 124–165; sequence AAAARCSQHGEQLKLYCQDDGRAICVVCDRAREHRSHAVLPL. Zn(2+)-binding residues include cysteine 129, histidine 132, cysteine 151, and histidine 157. Residues 165-275 are a coiled coil; the sequence is LEEAVQEAKE…SGQIQETAQK (111 aa). Residues 323–510 form the B30.2/SPRY domain; sequence LLKKFKEDLQ…STGTYLRIWP (188 aa).

Belongs to the TRIM/RBCC family. Forms homodimers. Interacts with GNIP2. Interacts with GYG1. Interacts with RNF187 (via C-terminus). Post-translationally, phosphorylated at Ser-106 by RPS6KA5/MSK1, which stimulates the ubiquitin ligase activity. In terms of processing, auto-ubiquitinates via 'Lys-63'-linked polyubiquitination. As to expression, highly expressed in antigen-presenting cells.

The protein resides in the nucleus. It is found in the cytoplasm. It localises to the golgi apparatus. The enzyme catalyses S-ubiquitinyl-[E2 ubiquitin-conjugating enzyme]-L-cysteine + [acceptor protein]-L-lysine = [E2 ubiquitin-conjugating enzyme]-L-cysteine + N(6)-ubiquitinyl-[acceptor protein]-L-lysine.. It participates in protein modification; protein ubiquitination. E3 ubiquitin-protein ligase that have both tumor-promoting and tumor-suppressing activities and functions in several biological processes including innate immunity, regulation of ferroptosis as well as cell proliferation and migration. Acts as an antiviral effector against multiple viruses by targeting specific viral proteins for ubiquitination and degradation including norovirus NTPase protein. Mechanistically, recognizes the C-terminal glutamine-containing motif generated by viral proteases that process the polyproteins and trigger their ubiquitination and subsequent degradation. Mediates 'Lys-63'-linked polyubiquitination and stabilization of the JUN coactivator RNF187 in response to growth factor signaling via the MEK/ERK pathway, thereby regulating JUN transactivation and cellular proliferation. Promotes the TLR4-mediated signaling activation through its E3 ligase domain leading to production of pro-inflammatory cytokines and type I interferon. Also plays a negative role in the regulation of exogenous cytosolic DNA virus-triggered immune response. Mechanistically, enhances the 'Lys-48'-linked ubiquitination of STING1 leading to its proteasome-dependent degradation. Mediates the ubiquitination of the SIN3-HDAC chromatin remodeling complex component BRMS1. Modulates NCOA4-mediated ferritinophagy and ferroptosis in glioblastoma cells by ubiquitinating NCOA4, leading to its degradation. In Mus musculus (Mouse), this protein is E3 ubiquitin-protein ligase TRIM7 (Trim7).